Consider the following 182-residue polypeptide: Protein Syd (182 aa).

Belongs to the Syd family.

It is found in the cell inner membrane. In terms of biological role, interacts with the SecY protein in vivo. May bind preferentially to an uncomplexed state of SecY, thus functioning either as a chelating agent for excess SecY in the cell or as a regulatory factor that negatively controls the translocase function. The polypeptide is Protein Syd (Aeromonas salmonicida (strain A449)).